Consider the following 126-residue polypeptide: Protein ApaG (126 aa).

Residues 2–126 form the ApaG domain; that stretch reads SDPRYQVDVS…FRLAVPGALH (125 aa).

The chain is Protein ApaG from Pseudomonas fluorescens (strain Pf0-1).